The following is a 192-amino-acid chain: Erythropoietin (192 aa).

Residues 1–25 (MGARDCTPLLMLSFLLFPLGFPVLG) form the signal peptide. 2 cysteine pairs are disulfide-bonded: C32–C187 and C54–C58. An N-linked (GlcNAc...) asparagine glycan is attached at N49. N63 and N108 each carry an N-linked (GlcNAc...) asparagine glycan.

It belongs to the EPO/TPO family. Produced by kidney or liver of adult mammals and by liver of fetal or neonatal mammals.

It localises to the secreted. Functionally, hormone involved in the regulation of erythrocyte proliferation and differentiation and the maintenance of a physiological level of circulating erythrocyte mass. Binds to EPOR leading to EPOR dimerization and JAK2 activation thereby activating specific downstream effectors, including STAT1 and STAT3. The sequence is that of Erythropoietin (EPO) from Bos mutus grunniens (Wild yak).